The primary structure comprises 176 residues: Small ribosomal subunit protein uS5 (176 aa).

Positions 11–74 (LSEVLVDVNR…QAAKKRMMKV (64 aa)) constitute an S5 DRBM domain.

Belongs to the universal ribosomal protein uS5 family. In terms of assembly, part of the 30S ribosomal subunit. Contacts proteins S4 and S8.

Its function is as follows. With S4 and S12 plays an important role in translational accuracy. In terms of biological role, located at the back of the 30S subunit body where it stabilizes the conformation of the head with respect to the body. The protein is Small ribosomal subunit protein uS5 of Rickettsia massiliae (strain Mtu5).